A 502-amino-acid polypeptide reads, in one-letter code: Lysine--tRNA ligase (502 aa).

Mg(2+) is bound by residues Glu399 and Glu406.

Belongs to the class-II aminoacyl-tRNA synthetase family. Homodimer. It depends on Mg(2+) as a cofactor.

Its subcellular location is the cytoplasm. The catalysed reaction is tRNA(Lys) + L-lysine + ATP = L-lysyl-tRNA(Lys) + AMP + diphosphate. This Synechococcus sp. (strain RCC307) protein is Lysine--tRNA ligase.